Here is an 815-residue protein sequence, read N- to C-terminus: Ataxin-1 (815 aa).

Over residues 1-41 the composition is skewed to basic and acidic residues; it reads MKSNQERSNECLPPKKREIPATSRSSEEKAPTLPSDNHRVE. The segment at 1-63 is disordered; it reads MKSNQERSNE…GHGGGRHGPA (63 aa). Residue K16 forms a Glycyl lysine isopeptide (Lys-Gly) (interchain with G-Cter in SUMO) linkage. Over residues 49-61 the composition is skewed to gly residues; the sequence is NPGGRGHGGGRHG. 2 positions are modified to phosphoserine: S82 and S88. Disordered regions lie at residues 185–270, 329–355, and 397–424; these read GSLS…PVHL, EKSR…VPHP, and VQQA…PGHR. K194 is covalently cross-linked (Glycyl lysine isopeptide (Lys-Gly) (interchain with G-Cter in SUMO)). Over residues 197–226 the composition is skewed to low complexity; that stretch reads QQQQQQQQQQQQHQHQQQQQQQQQQQQQQH. Phosphoserine is present on residues S238 and S253. Over residues 243–260 the composition is skewed to polar residues; sequence QQNQYVHISSSPQNTGRT. The interval 494-604 is self-association; that stretch reads VGSTDMEASG…TEDFIQSAEI (111 aa). Positions 538-815 are interaction with USP7; that stretch reads LVTQAAYPAM…CIEGRSNVGK (278 aa). Positions 540–766 are RNA-binding; the sequence is TQAAYPAMVQ…FLTKIEPSKP (227 aa). Residues 562–693 enclose the AXH domain; the sequence is SPAAAPPTLP…SLTLKNLKNG (132 aa). Residues K609, K696, and K745 each participate in a glycyl lysine isopeptide (Lys-Gly) (interchain with G-Cter in SUMO) cross-link. Residues 762–798 form a disordered region; it reads EPSKPAATRKRRWSAPESRKLEKSEDEPPLTLPKPSL. At S775 the chain carries Phosphoserine. The Nuclear localization signal motif lies at 794 to 797; it reads PKPS.

Belongs to the ATXN1 family. In terms of assembly, homooligomer. Interacts with CIC. Interacts with ANP32A, PQBP1, UBQLN4, ATXN1L and USP7. Directly interacts with RBPJ; this interaction is disrupted in the presence of Notch intracellular domain. Competes with ATXN1L for RBPJ-binding. Found in a complex with CIC and ATXN1L. In terms of processing, ubiquitinated by UBE3A, leading to its degradation by the proteasome. The presence of expanded poly-Gln repeats in spinocerebellar ataxia 1 (SCA1) patients impairs ubiquitination and degradation, leading to accumulation of ATXN1 in neurons and subsequent toxicity. Post-translationally, phosphorylation at Ser-775 increases the pathogenicity of proteins with an expanded polyglutamine tract. Sumoylation is dependent on nuclear localization and phosphorylation at Ser-775. It is reduced in the presence of an expanded polyglutamine tract. Widely expressed throughout the body.

The protein resides in the cytoplasm. It localises to the nucleus. Chromatin-binding factor that repress Notch signaling in the absence of Notch intracellular domain by acting as a CBF1 corepressor. Binds to the HEY promoter and might assist, along with NCOR2, RBPJ-mediated repression. Binds RNA in vitro. May be involved in RNA metabolism. In concert with CIC and ATXN1L, involved in brain development. In Homo sapiens (Human), this protein is Ataxin-1 (ATXN1).